A 563-amino-acid chain; its full sequence is Beta-catenin-like protein 1 (563 aa).

M1 is subject to N-acetylmethionine. The interval 1-81 is disordered; that stretch reads MDVGELLSYQ…EEEEPLDESS (81 aa). A Nuclear localization signal motif is present at residues 16–33; that stretch reads KRPRDDEEEELKTRRKQT. Positions 34 to 45 are enriched in basic and acidic residues; that stretch reads GPRERGRYREDE. A compositionally biased stretch (acidic residues) spans 66–78; the sequence is DGEEEEEEEEPLD. 2 HEAT repeats span residues 79–129 and 134–176; these read ESSV…VVAT and YHLL…TLHE. The residue at position 91 (K91) is an N6-acetyllysine. The short motif at 130 to 140 is the Nuclear export signal (NES) element; that stretch reads MPDLYHLLVEL. ARM repeat units lie at residues 178–228, 229–273, 274–323, 325–363, and 364–417; these read EEGA…MAEF, RPEM…LQDN, DENR…CLML, SNRERFLKGEGLQLMNLMLREKKISRSSALKVLDHAMIG, and PEGA…LLRN. The residue at position 389 (S389) is a Phosphoserine. The stretch at 476–540 forms a coiled coil; the sequence is DMEDEFYLRR…HIIKEYAENI (65 aa). S545 is modified (phosphoserine).

As to quaternary structure, component of the PRP19-CDC5L splicing complex composed of a core complex comprising a homotetramer of PRPF19, CDC5L, PLRG1 and BCAS2, and at least three less stably associated proteins CTNNBL1, CWC15 and HSPA8. Interacts directly with CWC15 and CDC5L in the complex. Interacts with AICDA; the interaction is important for the antibody diversification activity of AICDA. Interacts with PRPF31 (via its NLS). Interacts (via its N-terminal NLS) with KPNA1 and KPNA2.

It is found in the nucleus. Component of the PRP19-CDC5L complex that forms an integral part of the spliceosome and is required for activating pre-mRNA splicing. Participates in AID/AICDA-mediated somatic hypermutation (SHM) and class-switch recombination (CSR), 2 processes resulting in the production of high-affinity, mutated isotype-switched antibodies. This chain is Beta-catenin-like protein 1 (Ctnnbl1), found in Rattus norvegicus (Rat).